Reading from the N-terminus, the 345-residue chain is DNA-directed RNA polymerase subunit alpha (345 aa).

The tract at residues 1–233 is alpha N-terminal domain (alpha-NTD); the sequence is MVRNWCSLIR…KQLQVFVGLH (233 aa). Residues 256 to 345 form an alpha C-terminal domain (alpha-CTD) region; sequence LNDILLRHVE…EEMGEIQEEG (90 aa).

It belongs to the RNA polymerase alpha chain family. In terms of assembly, homodimer. The RNAP catalytic core consists of 2 alpha, 1 beta, 1 beta' and 1 omega subunit. When a sigma factor is associated with the core the holoenzyme is formed, which can initiate transcription.

It carries out the reaction RNA(n) + a ribonucleoside 5'-triphosphate = RNA(n+1) + diphosphate. In terms of biological role, DNA-dependent RNA polymerase catalyzes the transcription of DNA into RNA using the four ribonucleoside triphosphates as substrates. The protein is DNA-directed RNA polymerase subunit alpha of Syntrophus aciditrophicus (strain SB).